The primary structure comprises 322 residues: Quinolinate synthase (322 aa).

Histidine 36 and serine 53 together coordinate iminosuccinate. Cysteine 98 lines the [4Fe-4S] cluster pocket. Residues 124-126 (YIN) and serine 141 each bind iminosuccinate. Cysteine 184 serves as a coordination point for [4Fe-4S] cluster. Iminosuccinate-binding positions include 210–212 (HPE) and threonine 227. Residue cysteine 278 participates in [4Fe-4S] cluster binding.

This sequence belongs to the quinolinate synthase family. Type 2 subfamily. The cofactor is [4Fe-4S] cluster.

It localises to the cytoplasm. The catalysed reaction is iminosuccinate + dihydroxyacetone phosphate = quinolinate + phosphate + 2 H2O + H(+). It participates in cofactor biosynthesis; NAD(+) biosynthesis; quinolinate from iminoaspartate: step 1/1. Functionally, catalyzes the condensation of iminoaspartate with dihydroxyacetone phosphate to form quinolinate. The sequence is that of Quinolinate synthase from Chloroherpeton thalassium (strain ATCC 35110 / GB-78).